Reading from the N-terminus, the 155-residue chain is SsrA-binding protein (155 aa).

The segment covering 123-142 has biased composition (basic and acidic residues); the sequence is DLHDKRETEKKRDWEREKGQ. The tract at residues 123-155 is disordered; sequence DLHDKRETEKKRDWEREKGQLMRHKISSPRKDT. Basic residues predominate over residues 143–155; it reads LMRHKISSPRKDT.

The protein belongs to the SmpB family.

The protein resides in the cytoplasm. Functionally, required for rescue of stalled ribosomes mediated by trans-translation. Binds to transfer-messenger RNA (tmRNA), required for stable association of tmRNA with ribosomes. tmRNA and SmpB together mimic tRNA shape, replacing the anticodon stem-loop with SmpB. tmRNA is encoded by the ssrA gene; the 2 termini fold to resemble tRNA(Ala) and it encodes a 'tag peptide', a short internal open reading frame. During trans-translation Ala-aminoacylated tmRNA acts like a tRNA, entering the A-site of stalled ribosomes, displacing the stalled mRNA. The ribosome then switches to translate the ORF on the tmRNA; the nascent peptide is terminated with the 'tag peptide' encoded by the tmRNA and targeted for degradation. The ribosome is freed to recommence translation, which seems to be the essential function of trans-translation. This Methylibium petroleiphilum (strain ATCC BAA-1232 / LMG 22953 / PM1) protein is SsrA-binding protein.